The sequence spans 860 residues: DNA mismatch repair protein MutS (860 aa).

Residue 607–614 coordinates ATP; that stretch reads GPNMSGKS.

This sequence belongs to the DNA mismatch repair MutS family.

This protein is involved in the repair of mismatches in DNA. It is possible that it carries out the mismatch recognition step. This protein has a weak ATPase activity. The polypeptide is DNA mismatch repair protein MutS (Listeria welshimeri serovar 6b (strain ATCC 35897 / DSM 20650 / CCUG 15529 / CIP 8149 / NCTC 11857 / SLCC 5334 / V8)).